We begin with the raw amino-acid sequence, 229 residues long: Translation initiation factor IF-3 (229 aa).

Disordered regions lie at residues 1–21 (MAIQQRDSRGGTNRDARTNRR) and 184–229 (QAQR…AGPR). The span at 192 to 203 (AAAQAAPAAAPQ) shows a compositional bias: low complexity. Pro residues predominate over residues 204 to 221 (PGAPAAPPAAPAPAPAPE).

It belongs to the IF-3 family. In terms of assembly, monomer.

The protein resides in the cytoplasm. In terms of biological role, IF-3 binds to the 30S ribosomal subunit and shifts the equilibrium between 70S ribosomes and their 50S and 30S subunits in favor of the free subunits, thus enhancing the availability of 30S subunits on which protein synthesis initiation begins. This Anaeromyxobacter sp. (strain Fw109-5) protein is Translation initiation factor IF-3.